Reading from the N-terminus, the 659-residue chain is Anoctamin-10 (659 aa).

Topologically, residues 1 to 207 (MRVTLSTLDT…DSIRSYFGET (207 aa)) are cytoplasmic. Residues 208-228 (IALYFGFLEYFTFALIPMAII) traverse the membrane as a helical segment. Over 229–240 (GLPYYLFVWEDY) the chain is Extracellular. A helical transmembrane segment spans residues 241–261 (DKYVIFASFNLIWSTVILEVW). Over 262 to 316 (KRGCANMTYRWGTLVMKRQFEEPRPGFHGVLGINSVTGREEPLYSSYKRQLRIYL) the chain is Cytoplasmic. A helical transmembrane segment spans residues 317-337 (VSLPFVCLCLYFSLYVMMIYF). Residues 338–352 (DMEDWALSLHEDSGS) are Extracellular-facing. A helical transmembrane segment spans residues 353-373 (EWTSLLLYVPSIVYAVVIEIM). Residues 374–400 (NRLYRYAAEFLTSWENHRLESAYQNHL) are Cytoplasmic-facing. Residues 401–421 (VLKVLVFNFLNCFASLFYIAF) traverse the membrane as a helical segment. At 422-500 (VLKDMKLLRQ…YLGTFDDYLE (79 aa)) the chain is on the extracellular side. The helical transmembrane segment at 501-521 (LFLQFGYVSLFSCVYPLAAAF) threads the bilayer. Over 522 to 553 (AVLNNFTEVNSDALKMCRVFKRPFAEPSASIG) the chain is Cytoplasmic. The chain crosses the membrane as a helical span at residues 554-574 (VWQLAFETMSVISVVTNCALI). The Extracellular portion of the chain corresponds to 575 to 590 (GMSPQVNAVFPESKTD). Residues 591–611 (LVLIVVAVEHALLALKFILAF) traverse the membrane as a helical segment. Over 612–659 (AIPDKPRHIQQKLARLEFESLEALKQQQMKLVAENLKEEYQEDGKEAT) the chain is Cytoplasmic.

The protein belongs to the anoctamin family. Predominant expression seen in epithelial tissues.

The protein resides in the cell membrane. Its function is as follows. Does not exhibit calcium-activated chloride channel (CaCC) activity. Can inhibit the activity of ANO1. The protein is Anoctamin-10 (Ano10) of Mus musculus (Mouse).